Here is a 468-residue protein sequence, read N- to C-terminus: 6-phospho-beta-galactosidase (468 aa).

Glutamine 19, histidine 116, asparagine 159, glutamate 160, and asparagine 297 together coordinate D-galactose 6-phosphate. Glutamate 160 acts as the Proton donor in catalysis. Glutamate 375 functions as the Nucleophile in the catalytic mechanism. D-galactose 6-phosphate is bound by residues serine 428, tryptophan 429, lysine 435, and tyrosine 437.

It belongs to the glycosyl hydrolase 1 family.

The catalysed reaction is a 6-phospho-beta-D-galactoside + H2O = D-galactose 6-phosphate + an alcohol. The protein operates within carbohydrate metabolism; lactose degradation; D-galactose 6-phosphate and beta-D-glucose from lactose 6-phosphate: step 1/1. In Streptococcus pyogenes serotype M28 (strain MGAS6180), this protein is 6-phospho-beta-galactosidase.